Here is a 186-residue protein sequence, read N- to C-terminus: Large ribosomal subunit protein uL22 (186 aa).

It belongs to the universal ribosomal protein uL22 family. As to quaternary structure, component of the large ribosomal subunit (LSU). Mature N.crassa ribosomes consist of a small (40S) and a large (60S) subunit. The 40S small subunit contains 1 molecule of ribosomal RNA (18S rRNA) and at least 32 different proteins. The large 60S subunit contains 3 rRNA molecules (26S, 5.8S and 5S rRNA) and at least 42 different proteins.

It localises to the cytoplasm. In terms of biological role, component of the ribosome, a large ribonucleoprotein complex responsible for the synthesis of proteins in the cell. The small ribosomal subunit (SSU) binds messenger RNAs (mRNAs) and translates the encoded message by selecting cognate aminoacyl-transfer RNA (tRNA) molecules. The large subunit (LSU) contains the ribosomal catalytic site termed the peptidyl transferase center (PTC), which catalyzes the formation of peptide bonds, thereby polymerizing the amino acids delivered by tRNAs into a polypeptide chain. The nascent polypeptides leave the ribosome through a tunnel in the LSU and interact with protein factors that function in enzymatic processing, targeting, and the membrane insertion of nascent chains at the exit of the ribosomal tunnel. In Neurospora crassa (strain ATCC 24698 / 74-OR23-1A / CBS 708.71 / DSM 1257 / FGSC 987), this protein is Large ribosomal subunit protein uL22 (rpl-17).